The primary structure comprises 154 residues: Aspartate carbamoyltransferase regulatory chain (154 aa).

4 residues coordinate Zn(2+): Cys-110, Cys-115, Cys-136, and Cys-139.

This sequence belongs to the PyrI family. In terms of assembly, contains catalytic and regulatory chains. Requires Zn(2+) as cofactor.

In terms of biological role, involved in allosteric regulation of aspartate carbamoyltransferase. The protein is Aspartate carbamoyltransferase regulatory chain of Halobacterium salinarum (strain ATCC 700922 / JCM 11081 / NRC-1) (Halobacterium halobium).